We begin with the raw amino-acid sequence, 1061 residues long: Carbamoyl phosphate synthase large chain (1061 aa).

The tract at residues 1-401 is carboxyphosphate synthetic domain; it reads MPKRTDVHKI…ALQKAVRSLE (401 aa). ATP-binding residues include Arg129, Arg169, Gly175, Gly176, Lys208, Ile210, Glu215, Gly241, Ile242, His243, Gln284, and Glu298. An ATP-grasp 1 domain is found at 133 to 327; sequence KDLMQELNEP…IAKLAAKIAV (195 aa). Mg(2+) is bound by residues Gln284, Glu298, and Asn300. 3 residues coordinate Mn(2+): Gln284, Glu298, and Asn300. The tract at residues 402–546 is oligomerization domain; sequence IDEKDLISAK…YSSYDLENES (145 aa). The tract at residues 547 to 929 is carbamoyl phosphate synthetic domain; it reads KKSDKKSVLV…ALYKAFTGAK (383 aa). One can recognise an ATP-grasp 2 domain in the interval 671-861; that stretch reads DQTIKNLGLK…MAQVATRVIL (191 aa). Arg707, Ala746, Leu748, Glu752, Gly777, Val778, His779, Ser780, Gln820, and Glu832 together coordinate ATP. Mg(2+) is bound by residues Gln820, Glu832, and Asn834. Residues Gln820, Glu832, and Asn834 each coordinate Mn(2+). The region spanning 930–1061 is the MGS-like domain; that stretch reads MELPDNGNVL…ENRSFATNSL (132 aa). The allosteric domain stretch occupies residues 930–1061; it reads MELPDNGNVL…ENRSFATNSL (132 aa).

The protein belongs to the CarB family. Composed of two chains; the small (or glutamine) chain promotes the hydrolysis of glutamine to ammonia, which is used by the large (or ammonia) chain to synthesize carbamoyl phosphate. Tetramer of heterodimers (alpha,beta)4. Mg(2+) is required as a cofactor. Requires Mn(2+) as cofactor.

The catalysed reaction is hydrogencarbonate + L-glutamine + 2 ATP + H2O = carbamoyl phosphate + L-glutamate + 2 ADP + phosphate + 2 H(+). It carries out the reaction hydrogencarbonate + NH4(+) + 2 ATP = carbamoyl phosphate + 2 ADP + phosphate + 2 H(+). It participates in amino-acid biosynthesis; L-arginine biosynthesis; carbamoyl phosphate from bicarbonate: step 1/1. The protein operates within pyrimidine metabolism; UMP biosynthesis via de novo pathway; (S)-dihydroorotate from bicarbonate: step 1/3. Functionally, large subunit of the glutamine-dependent carbamoyl phosphate synthetase (CPSase). CPSase catalyzes the formation of carbamoyl phosphate from the ammonia moiety of glutamine, carbonate, and phosphate donated by ATP, constituting the first step of 2 biosynthetic pathways, one leading to arginine and/or urea and the other to pyrimidine nucleotides. The large subunit (synthetase) binds the substrates ammonia (free or transferred from glutamine from the small subunit), hydrogencarbonate and ATP and carries out an ATP-coupled ligase reaction, activating hydrogencarbonate by forming carboxy phosphate which reacts with ammonia to form carbamoyl phosphate. In Ligilactobacillus salivarius (strain UCC118) (Lactobacillus salivarius), this protein is Carbamoyl phosphate synthase large chain.